The chain runs to 354 residues: Protein-arginine kinase (354 aa).

The Phosphagen kinase C-terminal domain maps to isoleucine 24–alanine 254. ATP contacts are provided by residues serine 27–arginine 31, histidine 92, arginine 125, arginine 176–methionine 180, and arginine 207–glutamate 212. Residues arginine 337–alanine 342 carry the RDXXRA motif of the pArg binding pocket involved in allosteric regulation motif.

Belongs to the ATP:guanido phosphotransferase family.

It carries out the reaction L-arginyl-[protein] + ATP = N(omega)-phospho-L-arginyl-[protein] + ADP + H(+). Its activity is regulated as follows. Appears to be allosterically activated by the binding of pArg-containing polypeptides to the pArg-binding pocket localized in the C-terminal domain of McsB. Catalyzes the specific phosphorylation of arginine residues in a large number of proteins. Is part of the bacterial stress response system. Protein arginine phosphorylation has a physiologically important role and is involved in the regulation of many critical cellular processes, such as protein homeostasis, motility, competence, and stringent and stress responses, by regulating gene expression and protein activity. This is Protein-arginine kinase from Bacillus cereus (strain B4264).